We begin with the raw amino-acid sequence, 325 residues long: Large ribosomal subunit protein uL1m (325 aa).

A mitochondrion-targeting transit peptide spans 1-50; that stretch reads MAATVRCFGRVLIHHQRCSLATVTSQTSLYPCCIYVPVPNRHFAAAAKPA. Residues 47 to 66 form a disordered region; sequence AKPAKKTKKGTKEKASNEKK. Basic and acidic residues predominate over residues 56-66; it reads GTKEKASNEKK.

Belongs to the universal ribosomal protein uL1 family.

The protein localises to the mitochondrion. The sequence is that of Large ribosomal subunit protein uL1m (MRPL1) from Bos taurus (Bovine).